The chain runs to 252 residues: Body wall muscle protein HR-29 (252 aa).

Serine 2 is modified (N-acetylserine). 3 tandem repeats follow at residues 37–55 (RDWM…RDLS), 56–74 (QDWM…RDLS), and 75–93 (QDWM…RNLS). Residues 37-93 (RDWMTTPYSSTGIGRRDLSQDWMTTPYTPAGVGRRDLSQDWMTTPYTSKGIGSRNLS) form a 3 X 19 AA approximate tandem repeats region. The sHSP domain maps to 138-249 (ISVEHEGKTT…KKTAVPVTVE (112 aa)).

Belongs to the small heat shock protein (HSP20) family. Exists as an oligomer.

Its subcellular location is the membrane. Functionally, may be a component of myofibrils where it acts as a stabilizer. In Halocynthia roretzi (Sea squirt), this protein is Body wall muscle protein HR-29.